Consider the following 339-residue polypeptide: Protein H339R (339 aa).

This sequence belongs to the asfivirus H339R family. As to quaternary structure, interacts with NACA (alpha chain of nascent polypeptide-associated complex).

The protein resides in the host cytoplasm. The protein localises to the host nucleus. Its subcellular location is the virion. This chain is Protein H339R, found in Ornithodoros (relapsing fever ticks).